The chain runs to 295 residues: Phosphoribosylaminoimidazole-succinocarboxamide synthase (295 aa).

This sequence belongs to the SAICAR synthetase family.

It carries out the reaction 5-amino-1-(5-phospho-D-ribosyl)imidazole-4-carboxylate + L-aspartate + ATP = (2S)-2-[5-amino-1-(5-phospho-beta-D-ribosyl)imidazole-4-carboxamido]succinate + ADP + phosphate + 2 H(+). The protein operates within purine metabolism; IMP biosynthesis via de novo pathway; 5-amino-1-(5-phospho-D-ribosyl)imidazole-4-carboxamide from 5-amino-1-(5-phospho-D-ribosyl)imidazole-4-carboxylate: step 1/2. The protein is Phosphoribosylaminoimidazole-succinocarboxamide synthase of Corynebacterium ammoniagenes (Brevibacterium ammoniagenes).